We begin with the raw amino-acid sequence, 450 residues long: RUN domain-containing protein 3B (450 aa).

In terms of domain architecture, RUN spans 48-180 (DDTSAEFINF…IDFSFCLKGE (133 aa)). Residues 203–225 (DSISSDEEEMRTLGSSGSEAGTP) are disordered. Residues 291–317 (ISHKLEKEQLEIIILELQDQLTVLKNH) adopt a coiled-coil conformation.

This sequence belongs to the RUNDC3 family.

The chain is RUN domain-containing protein 3B (rundc3b) from Danio rerio (Zebrafish).